We begin with the raw amino-acid sequence, 168 residues long: Mediator of RNA polymerase II transcription subunit 7b (168 aa).

Positions 1–12 (MATATYPPPPPY) are enriched in pro residues. The disordered stretch occupies residues 1-33 (MATATYPPPPPYYRLYKDFSENTDSAPEPPPPI). Coiled-coil stretches lie at residues 64–92 (KDSN…ADVL) and 132–162 (IMEL…KDAF).

Belongs to the Mediator complex subunit 7 family. Component of the Mediator complex. Interacts with MEE14/CBP1.

The protein localises to the nucleus. In terms of biological role, component of the Mediator complex, a coactivator involved in the regulated transcription of nearly all RNA polymerase II-dependent genes. Mediator functions as a bridge to convey information from gene-specific regulatory proteins to the basal RNA polymerase II transcription machinery. The Mediator complex, having a compact conformation in its free form, is recruited to promoters by direct interactions with regulatory proteins and serves for the assembly of a functional pre-initiation complex with RNA polymerase II and the general transcription factors. In Arabidopsis thaliana (Mouse-ear cress), this protein is Mediator of RNA polymerase II transcription subunit 7b (MED7B).